A 279-amino-acid chain; its full sequence is uncharacterized protein (279 aa).

6 helical membrane passes run 29-49 (PYNMIAGAIGAVVLTILALVF), 77-97 (VLYALAPLIPLVILVIGGTSL), 105-125 (WTKMGVPQAMLIGAIYGIIVT), 147-167 (VLGIIIAASVFVAGLKSTGAV), 186-206 (TIGPFLMGLITGSGDAAAIAF), and 240-260 (PIAGVTIVCAGLAMVSPVEMV).

Belongs to the DcuC/DcuD transporter (TC 2.A.61) family.

The protein localises to the cell membrane. This is an uncharacterized protein from Haemophilus influenzae (strain ATCC 51907 / DSM 11121 / KW20 / Rd).